Consider the following 415-residue polypeptide: tRNA(Met) cytidine acetate ligase (415 aa).

Residues 7 to 20, Gly-101, Asn-162, and 187 to 188 each bind ATP; these read VVEYNPFHNGHRYH and RI.

Belongs to the TmcAL family.

It localises to the cytoplasm. It catalyses the reaction cytidine(34) in elongator tRNA(Met) + acetate + ATP = N(4)-acetylcytidine(34) in elongator tRNA(Met) + AMP + diphosphate. Catalyzes the formation of N(4)-acetylcytidine (ac(4)C) at the wobble position of elongator tRNA(Met), using acetate and ATP as substrates. First activates an acetate ion to form acetyladenylate (Ac-AMP) and then transfers the acetyl group to tRNA to form ac(4)C34. The sequence is that of tRNA(Met) cytidine acetate ligase from Bacillus velezensis (strain DSM 23117 / BGSC 10A6 / LMG 26770 / FZB42) (Bacillus amyloliquefaciens subsp. plantarum).